A 200-amino-acid chain; its full sequence is 3-isopropylmalate dehydratase small subunit (200 aa).

Belongs to the LeuD family. LeuD type 1 subfamily. As to quaternary structure, heterodimer of LeuC and LeuD.

The catalysed reaction is (2R,3S)-3-isopropylmalate = (2S)-2-isopropylmalate. It functions in the pathway amino-acid biosynthesis; L-leucine biosynthesis; L-leucine from 3-methyl-2-oxobutanoate: step 2/4. Its function is as follows. Catalyzes the isomerization between 2-isopropylmalate and 3-isopropylmalate, via the formation of 2-isopropylmaleate. This Yersinia pseudotuberculosis serotype O:1b (strain IP 31758) protein is 3-isopropylmalate dehydratase small subunit.